The chain runs to 347 residues: Phenylalanine--tRNA ligase alpha subunit (347 aa).

Glu-265 serves as a coordination point for Mg(2+).

The protein belongs to the class-II aminoacyl-tRNA synthetase family. Phe-tRNA synthetase alpha subunit type 1 subfamily. As to quaternary structure, tetramer of two alpha and two beta subunits. The cofactor is Mg(2+).

It is found in the cytoplasm. The enzyme catalyses tRNA(Phe) + L-phenylalanine + ATP = L-phenylalanyl-tRNA(Phe) + AMP + diphosphate + H(+). The sequence is that of Phenylalanine--tRNA ligase alpha subunit from Wolbachia pipientis subsp. Culex pipiens (strain wPip).